The sequence spans 217 residues: MAEVSAQMVKELRERTNAGMMDCKKALAESGGDFAKAEEWLRKKGIAKAAGKEGRVASEGIIGTYVHSGRIGVIVEVNCETDFVARNPDFQELVKDVAMQIAAAGPKFVRREEVPTDNLDKEKDIQREILKQQGKPEAMLEKILVGKMEKYYEGVCLVDQLWVKDDKKKVGEMISERAAKIGEKVSVRRFVRYELGEGIEKKKDDLAAEVAKTLGQA.

Residues 81–84 form an involved in Mg(2+) ion dislocation from EF-Tu region; it reads TDFV.

It belongs to the EF-Ts family.

It localises to the cytoplasm. In terms of biological role, associates with the EF-Tu.GDP complex and induces the exchange of GDP to GTP. It remains bound to the aminoacyl-tRNA.EF-Tu.GTP complex up to the GTP hydrolysis stage on the ribosome. This is Elongation factor Ts from Myxococcus xanthus (strain DK1622).